A 368-amino-acid chain; its full sequence is o-succinylbenzoate synthase (368 aa).

The active-site Proton donor is the lysine 183. The Mg(2+) site is built by aspartate 213, glutamate 239, and aspartate 264. The active-site Proton acceptor is the lysine 290.

This sequence belongs to the mandelate racemase/muconate lactonizing enzyme family. MenC type 1 subfamily. Monomer. A divalent metal cation serves as cofactor.

It carries out the reaction (1R,6R)-6-hydroxy-2-succinyl-cyclohexa-2,4-diene-1-carboxylate = 2-succinylbenzoate + H2O. Its pathway is quinol/quinone metabolism; 1,4-dihydroxy-2-naphthoate biosynthesis; 1,4-dihydroxy-2-naphthoate from chorismate: step 4/7. It participates in cofactor biosynthesis; phylloquinone biosynthesis. Converts 2-succinyl-6-hydroxy-2,4-cyclohexadiene-1-carboxylate (SHCHC) to 2-succinylbenzoate (OSB). Does not show N-succinylamino acid racemase (NSAR) activity with N-succinyl-L-phenylglycine as substrate. The protein is o-succinylbenzoate synthase of Desulfotalea psychrophila (strain LSv54 / DSM 12343).